The following is a 246-amino-acid chain: MPQVSMRDMLSAGVHFGHQTRYWNPKMGKYIFGARNKIHIINLEHTVPAFNEALNLITQMAAQKKKILFVGTKRAAQKTIKEQAERAGQPFVSHRWLGGMLTNYKTIRASIRRLSDLTTQSQDGTFAKLTKKEALMRSRDMEKLERSIGGIKGMGGLPDAMFVIDVEHERIAIQEANKLGIPVIGVVDTNSSPEGIDYVIPGNDDAIRAIKLYATAIADACLEGSKSSASVPNKDEYVAAEDGAAE.

Residues 225 to 246 form a disordered region; that stretch reads SKSSASVPNKDEYVAAEDGAAE.

The protein belongs to the universal ribosomal protein uS2 family.

The polypeptide is Small ribosomal subunit protein uS2 (Cellvibrio japonicus (strain Ueda107) (Pseudomonas fluorescens subsp. cellulosa)).